Here is a 592-residue protein sequence, read N- to C-terminus: Putative phosphatidylinositol 4-kinase alpha-like protein P2 (592 aa).

Residues 180 to 318 (EQLVEENTGS…ISWQAAIFKL (139 aa)) are pleckstrin homology (PH) domain conferring phosphoinositide binding specificity. A PI3K/PI4K catalytic domain is found at 275–576 (KVKRCGVSEL…VIQSCFLSNR (302 aa)). A G-loop region spans residues 281–287 (VSELEKE). Residues 441–449 (QIKDRHNGN) form a catalytic loop region. The tract at residues 460–484 (HIDFGFMFESSPGGNLGWEPDIKLT) is activation loop.

The protein belongs to the PI3/PI4-kinase family. Type III PI4K subfamily.

The sequence is that of Putative phosphatidylinositol 4-kinase alpha-like protein P2 (PI4KAP2) from Homo sapiens (Human).